We begin with the raw amino-acid sequence, 75 residues long: uncharacterized protein (75 aa).

This is an uncharacterized protein from Bovine papillomavirus type 3.